A 223-amino-acid chain; its full sequence is DNA mismatch repair protein MutH (223 aa).

Belongs to the MutH family.

It localises to the cytoplasm. In terms of biological role, sequence-specific endonuclease that cleaves unmethylated GATC sequences. It is involved in DNA mismatch repair. This is DNA mismatch repair protein MutH from Shewanella sp. (strain MR-7).